We begin with the raw amino-acid sequence, 85 residues long: Transcriptional repressor protein KorC (85 aa).

A DNA-binding region (H-T-H motif) is located at residues Val-28–Ala-47.

In terms of biological role, acts with KorA as corepressor in the control of the kilC and kilE operons. The chain is Transcriptional repressor protein KorC (korC) from Escherichia coli.